A 150-amino-acid chain; its full sequence is D-aminoacyl-tRNA deacylase (150 aa).

Residues 138-139 carry the Gly-cisPro motif, important for rejection of L-amino acids motif; that stretch reads GP.

Belongs to the DTD family. As to quaternary structure, homodimer.

Its subcellular location is the cytoplasm. It carries out the reaction glycyl-tRNA(Ala) + H2O = tRNA(Ala) + glycine + H(+). The catalysed reaction is a D-aminoacyl-tRNA + H2O = a tRNA + a D-alpha-amino acid + H(+). Its function is as follows. An aminoacyl-tRNA editing enzyme that deacylates mischarged D-aminoacyl-tRNAs. Also deacylates mischarged glycyl-tRNA(Ala), protecting cells against glycine mischarging by AlaRS. Acts via tRNA-based rather than protein-based catalysis; rejects L-amino acids rather than detecting D-amino acids in the active site. By recycling D-aminoacyl-tRNA to D-amino acids and free tRNA molecules, this enzyme counteracts the toxicity associated with the formation of D-aminoacyl-tRNA entities in vivo and helps enforce protein L-homochirality. The chain is D-aminoacyl-tRNA deacylase from Thermosipho melanesiensis (strain DSM 12029 / CIP 104789 / BI429).